Consider the following 72-residue polypeptide: Large ribosomal subunit protein bL31 (72 aa).

It belongs to the bacterial ribosomal protein bL31 family. Type A subfamily. As to quaternary structure, part of the 50S ribosomal subunit.

Functionally, binds the 23S rRNA. This chain is Large ribosomal subunit protein bL31, found in Maricaulis maris (strain MCS10) (Caulobacter maris).